Reading from the N-terminus, the 745-residue chain is Cytoskeleton-associated protein 2-like (745 aa).

A disordered region spans residues 25–141 (AKGKLKSQNT…GELSRKPVGS (117 aa)). A compositionally biased stretch (polar residues) spans 30–61 (KSQNTKPYLKSKNNCQNQPPSKSTIRPKNDVT). Residues 109 to 120 (SSNPYSKPSSKS) show a composition bias toward low complexity. Positions 121-133 (FQQCEAGSSTTGE) are enriched in polar residues. Positions 185–187 (KEN) match the KEN box motif. A compositionally biased stretch (basic and acidic residues) spans 192–203 (LTEPERKPDPKL). Disordered regions lie at residues 192 to 217 (LTEP…YNQT), 256 to 276 (VKSQ…KPSR), and 385 to 411 (RFNS…NNGF). A Glycyl lysine isopeptide (Lys-Gly) (interchain with G-Cter in SUMO1); alternate cross-link involves residue K198. K198 is covalently cross-linked (Glycyl lysine isopeptide (Lys-Gly) (interchain with G-Cter in SUMO2); alternate). Y204 bears the Phosphotyrosine mark. The segment covering 389 to 411 (AIPSTPSIRPNGTSGNKHNNNGF) has biased composition (polar residues). The residue at position 742 (T742) is a Phosphothreonine. S745 bears the Phosphoserine mark.

The protein belongs to the CKAP2 family. In terms of processing, ubiquitinated by the anaphase promoting complex/cyclosome (APC/C).

It is found in the cytoplasm. The protein resides in the cytoskeleton. It localises to the spindle pole. In terms of biological role, microtubule-associated protein required for mitotic spindle formation and cell-cycle progression in neural progenitor cells. This is Cytoskeleton-associated protein 2-like (CKAP2L) from Homo sapiens (Human).